A 235-amino-acid chain; its full sequence is Segregation and condensation protein A (235 aa).

It belongs to the ScpA family. As to quaternary structure, component of a cohesin-like complex composed of ScpA, ScpB and the Smc homodimer, in which ScpA and ScpB bind to the head domain of Smc. The presence of the three proteins is required for the association of the complex with DNA.

The protein resides in the cytoplasm. Its function is as follows. Participates in chromosomal partition during cell division. May act via the formation of a condensin-like complex containing Smc and ScpB that pull DNA away from mid-cell into both cell halves. This is Segregation and condensation protein A from Streptococcus equi subsp. equi (strain 4047).